The chain runs to 400 residues: Inositol polyphosphate 1-phosphatase (400 aa).

Asp-54 provides a ligand contact to Li(+). Residue Glu-79 participates in Mg(2+) binding. Glu-80 is a Li(+) binding site. Residues Asp-153 and Ile-155 each contribute to the Mg(2+) site. 1D-myo-inositol 1,4-bisphosphate contacts are provided by Asp-156, Ser-157, and Thr-158. The span at 238-257 (STRSNSEAQSQGTQNPSSEG) shows a compositional bias: polar residues. Residues 238-258 (STRSNSEAQSQGTQNPSSEGS) are disordered. 1D-myo-inositol 1,4-bisphosphate is bound by residues Ser-268, Lys-270, Gly-290, Ala-291, Lys-294, and Thr-312. Residue Asp-317 coordinates Mg(2+). Residue Ser-318 is modified to Phosphoserine.

Belongs to the inositol monophosphatase superfamily. In terms of assembly, monomer. Requires Mg(2+) as cofactor.

The catalysed reaction is 1D-myo-inositol 1,4-bisphosphate + H2O = 1D-myo-inositol 4-phosphate + phosphate. It catalyses the reaction 1D-myo-inositol 1,3,4-trisphosphate + H2O = 1D-myo-inositol 3,4-bisphosphate + phosphate. The protein operates within signal transduction; phosphatidylinositol signaling pathway. Its activity is regulated as follows. Inhibited by Li(+). Its function is as follows. Mg(2+)-dependent phosphatase that catalyzes the hydrolysis of the 1-position phosphate from inositol 1,4-bisphosphate and inositol 1,3,4-trisphosphate and participates in inositol phosphate metabolism. The chain is Inositol polyphosphate 1-phosphatase from Bos taurus (Bovine).